The primary structure comprises 161 residues: Allophycocyanin alpha chain (161 aa).

Asn71 carries the post-translational modification N4-methylasparagine. (2R,3E)-phycocyanobilin is bound at residue Cys81.

It belongs to the phycobiliprotein family. Heterodimer of an alpha and a beta chain. In terms of processing, contains one covalently linked phycocyanobilin chromophore.

It is found in the plastid. It localises to the chloroplast thylakoid membrane. Functionally, light-harvesting photosynthetic bile pigment-protein from the phycobiliprotein complex. Allophycocyanin has a maximum absorption at approximately 650 nanometers. The sequence is that of Allophycocyanin alpha chain (apcA) from Pyropia haitanensis (Red seaweed).